Reading from the N-terminus, the 535-residue chain is CTP synthase (535 aa).

Residues 1–267 form an amidoligase domain region; sequence MTKYIFVTGG…DQIVCDHLKL (267 aa). Residue Ser-13 coordinates CTP. Residue Ser-13 coordinates UTP. 14-19 provides a ligand contact to ATP; sequence SLGKGI. Tyr-54 lines the L-glutamine pocket. Position 71 (Asp-71) interacts with ATP. 2 residues coordinate Mg(2+): Asp-71 and Glu-141. CTP contacts are provided by residues 148–150, 188–193, and Lys-224; these read DIE and KTKPTQ. Residues 188-193 and Lys-224 contribute to the UTP site; that span reads KTKPTQ. ATP is bound at residue 240–242; that stretch reads RDA. A Glutamine amidotransferase type-1 domain is found at 292–534; the sequence is KIALVGKYVE…VKASLTNKES (243 aa). Gly-354 serves as a coordination point for L-glutamine. The Nucleophile; for glutamine hydrolysis role is filled by Cys-381. Residues 382–385, Glu-405, and Arg-462 contribute to the L-glutamine site; that span reads LGMQ. Residues His-507 and Glu-509 contribute to the active site.

Belongs to the CTP synthase family. In terms of assembly, homotetramer.

The enzyme catalyses UTP + L-glutamine + ATP + H2O = CTP + L-glutamate + ADP + phosphate + 2 H(+). The catalysed reaction is L-glutamine + H2O = L-glutamate + NH4(+). It carries out the reaction UTP + NH4(+) + ATP = CTP + ADP + phosphate + 2 H(+). It functions in the pathway pyrimidine metabolism; CTP biosynthesis via de novo pathway; CTP from UDP: step 2/2. Its activity is regulated as follows. Allosterically activated by GTP, when glutamine is the substrate; GTP has no effect on the reaction when ammonia is the substrate. The allosteric effector GTP functions by stabilizing the protein conformation that binds the tetrahedral intermediate(s) formed during glutamine hydrolysis. Inhibited by the product CTP, via allosteric rather than competitive inhibition. Functionally, catalyzes the ATP-dependent amination of UTP to CTP with either L-glutamine or ammonia as the source of nitrogen. Regulates intracellular CTP levels through interactions with the four ribonucleotide triphosphates. This chain is CTP synthase, found in Bacillus anthracis (strain A0248).